The chain runs to 482 residues: Glycogen synthase (482 aa).

Lysine 15 contacts ADP-alpha-D-glucose.

Belongs to the glycosyltransferase 1 family. Bacterial/plant glycogen synthase subfamily.

It catalyses the reaction [(1-&gt;4)-alpha-D-glucosyl](n) + ADP-alpha-D-glucose = [(1-&gt;4)-alpha-D-glucosyl](n+1) + ADP + H(+). It functions in the pathway glycan biosynthesis; glycogen biosynthesis. Functionally, synthesizes alpha-1,4-glucan chains using ADP-glucose. The sequence is that of Glycogen synthase from Hydrogenobaculum sp. (strain Y04AAS1).